The following is a 141-amino-acid chain: Large ribosomal subunit protein uL11 (141 aa).

It belongs to the universal ribosomal protein uL11 family. In terms of assembly, part of the ribosomal stalk of the 50S ribosomal subunit. Interacts with L10 and the large rRNA to form the base of the stalk. L10 forms an elongated spine to which L12 dimers bind in a sequential fashion forming a multimeric L10(L12)X complex. One or more lysine residues are methylated.

Its function is as follows. Forms part of the ribosomal stalk which helps the ribosome interact with GTP-bound translation factors. The sequence is that of Large ribosomal subunit protein uL11 from Chlamydia muridarum (strain MoPn / Nigg).